A 475-amino-acid polypeptide reads, in one-letter code: Adenosylhomocysteinase (475 aa).

Substrate contacts are provided by Thr-63, Asp-138, and Glu-199. Position 200–202 (200–202 (TTT)) interacts with NAD(+). Substrate is bound by residues Lys-229 and Asp-233. NAD(+)-binding positions include Asn-234, 263–268 (GYGDVG), Glu-286, Asn-321, 342–344 (IGH), and Asn-389.

This sequence belongs to the adenosylhomocysteinase family. It depends on NAD(+) as a cofactor.

The protein localises to the cytoplasm. The enzyme catalyses S-adenosyl-L-homocysteine + H2O = L-homocysteine + adenosine. Its pathway is amino-acid biosynthesis; L-homocysteine biosynthesis; L-homocysteine from S-adenosyl-L-homocysteine: step 1/1. Functionally, may play a key role in the regulation of the intracellular concentration of adenosylhomocysteine. This chain is Adenosylhomocysteinase, found in Solibacter usitatus (strain Ellin6076).